A 635-amino-acid polypeptide reads, in one-letter code: Biosynthetic arginine decarboxylase (635 aa).

Lysine 100 carries the N6-(pyridoxal phosphate)lysine modification. Residue 282–292 (VDIGGGLGVDY) participates in substrate binding.

Belongs to the Orn/Lys/Arg decarboxylase class-II family. SpeA subfamily. Mg(2+) is required as a cofactor. It depends on pyridoxal 5'-phosphate as a cofactor.

It catalyses the reaction L-arginine + H(+) = agmatine + CO2. It functions in the pathway amine and polyamine biosynthesis; agmatine biosynthesis; agmatine from L-arginine: step 1/1. Its function is as follows. Catalyzes the biosynthesis of agmatine from arginine. The protein is Biosynthetic arginine decarboxylase of Geobacter sulfurreducens (strain ATCC 51573 / DSM 12127 / PCA).